Consider the following 279-residue polypeptide: ANKRPAWIMGHMVNAIYQIDEFVNLGANSIETDVSFDKDANPEYTYHGVPCDCGRSCLKWEYFSDFLKGLRKATTPGDSKYHAKLVLVVFDLKTGSLYDNQAYDAGKKLAKNLLKHYWNNGNNGGRAYIVLSIPDLNHYKLITGFKETLKSEGHPELMDKVGHDFSGNDAIGDVGNAYKKAGVTGHVWQSDGITNCLLRGLSRVKDAVKNRDSSNGFINKVYYWTVDKRATTREALDAGVDGVMTNYPDVITDVLNESAYKAKFRIATYDDNPWETFKN.

His-11 is a catalytic residue. Positions 31 and 33 each coordinate Mg(2+). The active-site Nucleophile is the His-47. Cystine bridges form between Cys-51–Cys-57 and Cys-53–Cys-196. A Mg(2+)-binding site is contributed by Asp-91. Residue Asn-256 is glycosylated (N-linked (GlcNAc...) asparagine).

Belongs to the arthropod phospholipase D family. Class II subfamily. Requires Mg(2+) as cofactor. In terms of tissue distribution, expressed by the venom gland.

Its subcellular location is the secreted. It catalyses the reaction an N-(acyl)-sphingosylphosphocholine = an N-(acyl)-sphingosyl-1,3-cyclic phosphate + choline. The enzyme catalyses an N-(acyl)-sphingosylphosphoethanolamine = an N-(acyl)-sphingosyl-1,3-cyclic phosphate + ethanolamine. The catalysed reaction is a 1-acyl-sn-glycero-3-phosphocholine = a 1-acyl-sn-glycero-2,3-cyclic phosphate + choline. It carries out the reaction a 1-acyl-sn-glycero-3-phosphoethanolamine = a 1-acyl-sn-glycero-2,3-cyclic phosphate + ethanolamine. With respect to regulation, inhibited with low affinity by edelfosine. In terms of biological role, dermonecrotic toxins cleave the phosphodiester linkage between the phosphate and headgroup of certain phospholipids (sphingolipid and lysolipid substrates), forming an alcohol (often choline) and a cyclic phosphate. This toxin acts on sphingomyelin (SM). It also acts on a broad range of lysophospholipids, like lysophosphatidylinositol (LPI), lysophosphatidylglycerol (LPG), lysophosphatidylethanolamine (LPE), lysobisphosphatidic acid (LBPA), lysophosphatidylserine (LPS) and lysophosphatidylcholines (LPC) of varying chain lengths. The substrate preference is LPI &gt; LPG &gt; LPS &gt; LPC &gt;&gt; LPE, LBPA. Furthermore, the enzyme also act on cyclic phosphatidic acid and lyso-platelet activating factor (LPAF, an alkyl-LPC). The enzyme does not act on sphingosylphosphorylcholine (SPC, also known as lyso-sphingomyelin) and PAF. The toxin may also act on ceramide phosphoethanolamine (CPE). It acts by transphosphatidylation, releasing exclusively cyclic phosphate products as second products. It does not exhibit detectable PLA1/2 activity. It induces dose-dependent hemolysis and dermonecrosis. Also induces increased vascular permeability, edema, inflammatory response, and platelet aggregation. The sequence is that of Dermonecrotic toxin LrSicTox-alphaIA1i from Loxosceles reclusa (Brown recluse spider).